The chain runs to 77 residues: Large ribosomal subunit protein uL24 (77 aa).

It belongs to the universal ribosomal protein uL24 family. In terms of assembly, part of the 50S ribosomal subunit.

One of two assembly initiator proteins, it binds directly to the 5'-end of the 23S rRNA, where it nucleates assembly of the 50S subunit. In terms of biological role, one of the proteins that surrounds the polypeptide exit tunnel on the outside of the subunit. This chain is Large ribosomal subunit protein uL24, found in Campylobacter jejuni subsp. doylei (strain ATCC BAA-1458 / RM4099 / 269.97).